A 555-amino-acid chain; its full sequence is MADTETDQGLNKKLSFSFCEEDTESEGQMTAQDIGGAQSQKPGREESEELEGPVPPTRDELHTSLSRDKESPGPDLWKSVSGPPKCPETPVLHSKSKLPVPTNFSTPKNSLGQPEISLLEKLSSRSSRHMRLTPASLMDEKTSLSLVNINPFTPETYRKLLLQSKGKRKTRDYLEETGEEESKSVQWLPAKRSILQETNMASRYEKEFFEIEKIGVGEFGTVYKCIKRLDGCIYAIKRSAKSFSGLSNELDLHEVYAHAVLGHHPHVVRYYSSWIEDDHVVIQNEYCNGGSLQAAISENTASNNHFQEPKLKDILLQISLGLKYIHNSGMVHLDIKPSNIFICHKMQCDSPVGPEEAESEADWFLNASVMYKIGDLGHATSISKPKVEEGDTRFLANEILQENYQHLPKADIFALGLTIAVAAGAESLPINGDMWHHIRKGNFPEISQELSDDFYGLLKNMIHPAPKERPSAAALARSRILWPFLEKTDELQKQLNLEKSKTATLKRELKKARHIQTPQREVHHCYYQICKGSRHLLVGGRRKAPSSFTRGTSSV.

Residues 1–112 (MADTETDQGL…NFSTPKNSLG (112 aa)) are disordered. S15 carries the post-translational modification Phosphoserine; by CaMK2 and PKA. Polar residues predominate over residues 26–41 (EGQMTAQDIGGAQSQK). Over residues 57 to 72 (TRDELHTSLSRDKESP) the composition is skewed to basic and acidic residues. S71 is subject to Phosphoserine. Positions 102 to 112 (TNFSTPKNSLG) are enriched in polar residues. The Nuclear localization signal motif lies at 167-169 (KRK). Residues 208-485 (FFEIEKIGVG…ARSRILWPFL (278 aa)) enclose the Protein kinase domain. ATP is bound by residues 214–222 (IGVGEFGTV) and K237. Residues 310-324 (KLKDILLQISLGLKY) carry the Nuclear export signal motif. The Proton acceptor role is filled by D334. 2 residues coordinate Mg(2+): N339 and D375. The stretch at 488–514 (TDELQKQLNLEKSKTATLKRELKKARH) forms a coiled coil.

Belongs to the protein kinase superfamily. Ser/Thr protein kinase family. WEE1 subfamily. Post-translationally, phosphorylated by PKA at Ser-15 in vitro, leading to activate kinase activity. Phosphorylation at Ser-15 by CaMK2, leading to increase its activity and promote metaphase II exit during egg activation. Ovary-specific.

The protein localises to the cytoplasm. The protein resides in the nucleus. It catalyses the reaction L-tyrosyl-[protein] + ATP = O-phospho-L-tyrosyl-[protein] + ADP + H(+). In terms of biological role, oocyte-specific protein tyrosine kinase that phosphorylates and inhibits CDK1 and acts as a key regulator of meiosis during both prophase I and metaphase II. Required to maintain meiotic arrest in oocytes during the germinal vesicle (GV) stage, a long period of quiescence at dictyate prophase I, by phosphorylating CDK1 at 'Tyr-15', leading to inhibit CDK1 activity and prevent meiotic reentry. Also required for metaphase II exit during egg activation by phosphorylating CDK1 at 'Tyr-15', to ensure exit from meiosis in oocytes and promote pronuclear formation. In Mus musculus (Mouse), this protein is Wee1-like protein kinase 2 (Wee2).